The primary structure comprises 271 residues: High mobility group protein homolog TDP-1 (271 aa).

In terms of domain architecture, DEK-C spans 8-63 (GPLPTDIEETVITIMREEGVRYITAKILRMRLESKYQMEFGPHKAAIDDIVARAMQ). Positions 75–118 (LKEKDASKSSGGKGSKRARSAGAEAPSKTKKEMTEKPKKPADYP) are disordered. Over residues 101–116 (SKTKKEMTEKPKKPAD) the composition is skewed to basic and acidic residues. 2 DNA-binding regions (HMG box) span residues 118 to 186 (PKPA…DEYK) and 206 to 270 (PKRA…AALP).

The protein localises to the nucleus. Functionally, unknown. May play a role in transcription and/or DNA replication. It is not known whether this protein is DNA sequence binding-specific or not. The sequence is that of High mobility group protein homolog TDP-1 from Trypanosoma brucei rhodesiense.